We begin with the raw amino-acid sequence, 500 residues long: Glycerol kinase (500 aa).

Residue threonine 13 coordinates ADP. 3 residues coordinate ATP: threonine 13, threonine 14, and serine 15. Residue threonine 13 participates in sn-glycerol 3-phosphate binding. Arginine 17 contributes to the ADP binding site. Residues arginine 83, glutamate 84, and tyrosine 135 each coordinate sn-glycerol 3-phosphate. Positions 83, 84, and 135 each coordinate glycerol. Position 231 is a phosphohistidine; by HPr (histidine 231). Sn-glycerol 3-phosphate is bound at residue aspartate 245. Glycerol contacts are provided by aspartate 245 and glutamine 246. Residues threonine 267 and glycine 310 each contribute to the ADP site. Threonine 267, glycine 310, glutamine 314, and glycine 411 together coordinate ATP. Residues glycine 411 and asparagine 415 each coordinate ADP.

Belongs to the FGGY kinase family. In terms of assembly, homotetramer and homodimer (in equilibrium). The phosphoenolpyruvate-dependent sugar phosphotransferase system (PTS), including enzyme I, and histidine-containing protein (HPr) are required for the phosphorylation, which leads to the activation of the enzyme.

It catalyses the reaction glycerol + ATP = sn-glycerol 3-phosphate + ADP + H(+). Its pathway is polyol metabolism; glycerol degradation via glycerol kinase pathway; sn-glycerol 3-phosphate from glycerol: step 1/1. Activated by phosphorylation and inhibited by fructose 1,6-bisphosphate (FBP). Functionally, key enzyme in the regulation of glycerol uptake and metabolism. Catalyzes the phosphorylation of glycerol to yield sn-glycerol 3-phosphate. The polypeptide is Glycerol kinase (Oceanobacillus iheyensis (strain DSM 14371 / CIP 107618 / JCM 11309 / KCTC 3954 / HTE831)).